The following is a 446-amino-acid chain: Sensor protein PfeS (446 aa).

The Cytoplasmic portion of the chain corresponds to 1–9; it reads MRRHPLLWK. A helical transmembrane segment spans residues 10-30; that stretch reads LALLQVGFCLLLTWLIYTWGL. At 31 to 155 the chain is on the periplasmic side; sequence SVERSTYFLA…LLPGGLTPWT (125 aa). A helical membrane pass occupies residues 156–176; sequence HLVTHGIVPTLLAALLGLLLY. Residues 177-233 enclose the HAMP domain; that stretch reads RHLVVPLNRLRDRADALRADELESTPLAAPLAARRDELGELAQALEHMAERLRLSLA. At 177-446 the chain is on the cytoplasmic side; the sequence is RHLVVPLNRL…CLHLWLPAAA (270 aa). Positions 241–446 constitute a Histidine kinase domain; it reads TLSHELRTPL…CLHLWLPAAA (206 aa). Position 244 is a phosphohistidine; by autocatalysis (H244).

The protein localises to the cell inner membrane. It carries out the reaction ATP + protein L-histidine = ADP + protein N-phospho-L-histidine.. Member of the two-component regulatory system PfeR/PfeS. May activate PfeR by phosphorylation. The chain is Sensor protein PfeS (pfeS) from Pseudomonas aeruginosa (strain ATCC 15692 / DSM 22644 / CIP 104116 / JCM 14847 / LMG 12228 / 1C / PRS 101 / PAO1).